Consider the following 837-residue polypeptide: Tuftelin-interacting protein 11 (837 aa).

Composition is skewed to basic and acidic residues over residues 1-13 (MSLSHLYRDGEGH) and 44-64 (QTKEEATYGVWAERDSDEERP). Disordered regions lie at residues 1 to 21 (MSLSHLYRDGEGHLDDDDDER), 34 to 73 (EFNPNRQRHWQTKEEATYGVWAERDSDEERPSFGGKRARD), and 85 to 135 (LKKG…FAGG). The tract at residues 1 to 50 (MSLSHLYRDGEGHLDDDDDERENFEITDWDLQNEFNPNRQRHWQTKEEAT) is required for interaction with DHX15. Phosphoserine is present on residues Ser-2, Ser-59, Ser-95, and Ser-98. Residues 91 to 100 (EEADSEDSDA) are compositionally biased toward acidic residues. Positions 101-116 (EEKPVKQEDFPKDLGP) are enriched in basic and acidic residues. Ser-144 carries the post-translational modification Phosphoserine. In terms of domain architecture, G-patch spans 149-195 (TKGIGQKLLQKMGYVPGRGLGKNAQGIINPIEAKQRKGKGAVGAYGS). A disordered region spans residues 183–236 (QRKGKGAVGAYGSERTTQSLQDFPVADSEEEAEEEFQKELSQWRKDPSGSKKKP). The residue at position 210 (Ser-210) is a Phosphoserine. Basic and acidic residues predominate over residues 217 to 231 (EFQKELSQWRKDPSG). The short motif at 700 to 705 (VKDKFN) is the Nuclear localization signal element. The tract at residues 710–734 (IMNRAVSSNVGAYMQPGARENIAYL) is required for nuclear speckle localization.

Belongs to the TFP11/STIP family. As to quaternary structure, identified in the spliceosome C complex. Found in the Intron Large (IL) complex, a post-mRNA release spliceosomal complex containing the excised intron, U2, U5 and U6 snRNPs, and splicing factors. Interacts with TUFT1. Interacts with DHX15; indicative for a recruitment of DHX15 to the IL complex. Interacts with GCFC2.

The protein localises to the cytoplasm. Its subcellular location is the nucleus. Functionally, involved in pre-mRNA splicing, specifically in spliceosome disassembly during late-stage splicing events. Intron turnover seems to proceed through reactions in two lariat-intron associated complexes termed Intron Large (IL) and Intron Small (IS). In cooperation with DHX15 seems to mediate the transition of the U2, U5 and U6 snRNP-containing IL complex to the snRNP-free IS complex leading to efficient debranching and turnover of excised introns. May play a role in the differentiation of ameloblasts and odontoblasts or in the forming of the enamel extracellular matrix. In Rattus norvegicus (Rat), this protein is Tuftelin-interacting protein 11 (Tfip11).